A 431-amino-acid chain; its full sequence is Histidinol dehydrogenase (431 aa).

The NAD(+) site is built by tyrosine 127, glutamine 189, and asparagine 212. Residues serine 237, glutamine 259, and histidine 262 each contribute to the substrate site. Residues glutamine 259 and histidine 262 each coordinate Zn(2+). Active-site proton acceptor residues include glutamate 326 and histidine 327. Residues histidine 327, aspartate 360, glutamate 414, and histidine 419 each coordinate substrate. Aspartate 360 serves as a coordination point for Zn(2+). Histidine 419 contributes to the Zn(2+) binding site.

It belongs to the histidinol dehydrogenase family. Requires Zn(2+) as cofactor.

The catalysed reaction is L-histidinol + 2 NAD(+) + H2O = L-histidine + 2 NADH + 3 H(+). It functions in the pathway amino-acid biosynthesis; L-histidine biosynthesis; L-histidine from 5-phospho-alpha-D-ribose 1-diphosphate: step 9/9. Its function is as follows. Catalyzes the sequential NAD-dependent oxidations of L-histidinol to L-histidinaldehyde and then to L-histidine. This Xanthomonas axonopodis pv. citri (strain 306) protein is Histidinol dehydrogenase.